Here is a 353-residue protein sequence, read N- to C-terminus: Photosystem II protein D1 (353 aa).

An N-acetylthreonine modification is found at Thr2. Thr2 is modified (phosphothreonine). Transmembrane regions (helical) follow at residues 29-46 (YIGW…TATS), 118-133 (HFLL…EWEL), and 142-156 (WIAV…AATA). Residue His118 coordinates chlorophyll a. A pheophytin a-binding site is contributed by Tyr126. Residues Asp170 and Glu189 each coordinate [CaMn4O5] cluster. Residues 197-218 (FHMLGVAGVFGGSLFSAMHGSL) form a helical membrane-spanning segment. Chlorophyll a is bound at residue His198. Residues His215 and 264 to 265 (SF) contribute to the a quinone site. His215 is a binding site for Fe cation. His272 provides a ligand contact to Fe cation. The chain crosses the membrane as a helical span at residues 274 to 288 (FLAAWPVVGIWFTAL). Residues His332, Glu333, Asp342, and Ala344 each coordinate [CaMn4O5] cluster. A propeptide spanning residues 345-353 (ALEVPSING) is cleaved from the precursor.

This sequence belongs to the reaction center PufL/M/PsbA/D family. As to quaternary structure, PSII is composed of 1 copy each of membrane proteins PsbA, PsbB, PsbC, PsbD, PsbE, PsbF, PsbH, PsbI, PsbJ, PsbK, PsbL, PsbM, PsbT, PsbX, PsbY, PsbZ, Psb30/Ycf12, at least 3 peripheral proteins of the oxygen-evolving complex and a large number of cofactors. It forms dimeric complexes. The D1/D2 heterodimer binds P680, chlorophylls that are the primary electron donor of PSII, and subsequent electron acceptors. It shares a non-heme iron and each subunit binds pheophytin, quinone, additional chlorophylls, carotenoids and lipids. D1 provides most of the ligands for the Mn4-Ca-O5 cluster of the oxygen-evolving complex (OEC). There is also a Cl(-1) ion associated with D1 and D2, which is required for oxygen evolution. The PSII complex binds additional chlorophylls, carotenoids and specific lipids. is required as a cofactor. Post-translationally, tyr-161 forms a radical intermediate that is referred to as redox-active TyrZ, YZ or Y-Z. In terms of processing, C-terminally processed by CTPA; processing is essential to allow assembly of the oxygen-evolving complex and thus photosynthetic growth.

It is found in the plastid. The protein localises to the chloroplast thylakoid membrane. The catalysed reaction is 2 a plastoquinone + 4 hnu + 2 H2O = 2 a plastoquinol + O2. Its function is as follows. Photosystem II (PSII) is a light-driven water:plastoquinone oxidoreductase that uses light energy to abstract electrons from H(2)O, generating O(2) and a proton gradient subsequently used for ATP formation. It consists of a core antenna complex that captures photons, and an electron transfer chain that converts photonic excitation into a charge separation. The D1/D2 (PsbA/PsbD) reaction center heterodimer binds P680, the primary electron donor of PSII as well as several subsequent electron acceptors. The polypeptide is Photosystem II protein D1 (Agrostis stolonifera (Creeping bentgrass)).